The primary structure comprises 350 residues: D-alanine--D-alanine ligase (350 aa).

An ATP-grasp domain is found at 134 to 337 (KIFAAQRGVK…LPKKHSIKVS (204 aa)). 160 to 212 (IAYPIILKPARLGSSIGVSVINEEKELDYGRDLAFEYDDTIIAESFKSGVKEY) serves as a coordination point for ATP. Mg(2+) is bound by residues Asp-289, Glu-301, and Asn-303.

This sequence belongs to the D-alanine--D-alanine ligase family. Requires Mg(2+) as cofactor. It depends on Mn(2+) as a cofactor.

The protein resides in the cytoplasm. It carries out the reaction 2 D-alanine + ATP = D-alanyl-D-alanine + ADP + phosphate + H(+). The protein operates within cell wall biogenesis; peptidoglycan biosynthesis. In terms of biological role, cell wall formation. In Helicobacter hepaticus (strain ATCC 51449 / 3B1), this protein is D-alanine--D-alanine ligase.